Here is a 156-residue protein sequence, read N- to C-terminus: Small ribosomal subunit protein uS7 (156 aa).

Belongs to the universal ribosomal protein uS7 family. As to quaternary structure, part of the 30S ribosomal subunit. Contacts proteins S9 and S11.

One of the primary rRNA binding proteins, it binds directly to 16S rRNA where it nucleates assembly of the head domain of the 30S subunit. Is located at the subunit interface close to the decoding center, probably blocks exit of the E-site tRNA. This Pseudomonas fluorescens (strain ATCC BAA-477 / NRRL B-23932 / Pf-5) protein is Small ribosomal subunit protein uS7.